A 156-amino-acid chain; its full sequence is Small ribosomal subunit protein uS7 (156 aa).

Belongs to the universal ribosomal protein uS7 family. In terms of assembly, part of the 30S ribosomal subunit. Contacts proteins S9 and S11.

Its function is as follows. One of the primary rRNA binding proteins, it binds directly to 16S rRNA where it nucleates assembly of the head domain of the 30S subunit. Is located at the subunit interface close to the decoding center, probably blocks exit of the E-site tRNA. This is Small ribosomal subunit protein uS7 from Shewanella sp. (strain ANA-3).